The sequence spans 192 residues: Xanthine phosphoribosyltransferase (192 aa).

Xanthine contacts are provided by Leu20 and Asn27. 5-phospho-alpha-D-ribose 1-diphosphate is bound at residue 128 to 132 (ANGQA). Lys156 contributes to the xanthine binding site.

The protein belongs to the purine/pyrimidine phosphoribosyltransferase family. Xpt subfamily. In terms of assembly, homodimer.

It localises to the cytoplasm. It carries out the reaction XMP + diphosphate = xanthine + 5-phospho-alpha-D-ribose 1-diphosphate. The protein operates within purine metabolism; XMP biosynthesis via salvage pathway; XMP from xanthine: step 1/1. Its function is as follows. Converts the preformed base xanthine, a product of nucleic acid breakdown, to xanthosine 5'-monophosphate (XMP), so it can be reused for RNA or DNA synthesis. The protein is Xanthine phosphoribosyltransferase of Listeria monocytogenes serotype 4b (strain CLIP80459).